The chain runs to 542 residues: Peptide chain release factor 3 (542 aa).

Residues 11–279 form the tr-type G domain; sequence EKRRTFAIIS…AYVEYAPSPR (269 aa). GTP-binding positions include 20 to 27, 88 to 92, and 142 to 145; these read SHPDAGKT, DTPGH, and NKLD.

This sequence belongs to the TRAFAC class translation factor GTPase superfamily. Classic translation factor GTPase family. PrfC subfamily.

The protein localises to the cytoplasm. Functionally, increases the formation of ribosomal termination complexes and stimulates activities of RF-1 and RF-2. It binds guanine nucleotides and has strong preference for UGA stop codons. It may interact directly with the ribosome. The stimulation of RF-1 and RF-2 is significantly reduced by GTP and GDP, but not by GMP. The sequence is that of Peptide chain release factor 3 from Nitrosococcus oceani (strain ATCC 19707 / BCRC 17464 / JCM 30415 / NCIMB 11848 / C-107).